Reading from the N-terminus, the 191-residue chain is MAPSLHPLIDNGITPGSGSFAGGKLRCHCASDRVEVTLNSNVAHNHACGCSKCWKPSGSLFSIVGVVPRDAVSVTANASKLSVVDKEATIQRYGCKDCGVHLFGRIEKDHPFRGLDFVHVELSDEKGWQEPQFAGFVSSIIEQGSHPKEMDEVRAKFKALGLQTYDVLSPALMDLISTFTAQASGIRFANL.

In terms of domain architecture, CENP-V/GFA spans 20 to 166 (FAGGKLRCHC…FKALGLQTYD (147 aa)). The Zn(2+) site is built by Cys-27, Cys-29, Cys-48, Cys-50, Cys-53, Cys-95, and Cys-98.

The protein belongs to the Gfa family. Requires Zn(2+) as cofactor.

The catalysed reaction is S-(hydroxymethyl)glutathione = glutathione + formaldehyde. The protein operates within one-carbon metabolism; formaldehyde degradation; formate from formaldehyde (glutathione route): step 1/3. Functionally, catalyzes the condensation of formaldehyde and glutathione to S-hydroxymethylglutathione. In Penicillium rubens (strain ATCC 28089 / DSM 1075 / NRRL 1951 / Wisconsin 54-1255) (Penicillium chrysogenum), this protein is Putative glutathione-dependent formaldehyde-activating enzyme.